The following is a 495-amino-acid chain: Sialin (495 aa).

Positions 1–18 (MRSPVRDLARNDGEESTD) are enriched in basic and acidic residues. Residues 1–24 (MRSPVRDLARNDGEESTDRTPLLP) are disordered. Over 1–41 (MRSPVRDLARNDGEESTDRTPLLPGAPRAEAAPVCCSARYN) the chain is Cytoplasmic. Ser3 is modified (phosphoserine). Residues 22 to 23 (LL) carry the Dileucine internalization motif motif. A helical membrane pass occupies residues 42–62 (LAILAFFGFFIVYALRVNLSV). Residues 63–109 (ALVDMVDSNTTLEDNRTSKACPEHSAPIKVHHNQTGKKYQWDAETQG) are Lumenal-facing. N-linked (GlcNAc...) asparagine glycosylation is found at Asn71, Asn77, and Asn95. Residues 110 to 130 (WILGSFFYGYIITQIPGGYVA) form a helical membrane-spanning segment. Residues 131 to 136 (SKIGGK) lie on the Cytoplasmic side of the membrane. The chain crosses the membrane as a helical span at residues 137 to 157 (MLLGFGILGTAVLTLFTPIAA). Asp158 is a topological domain (lumenal). The chain crosses the membrane as a helical span at residues 159–179 (LGVGPLIVLRALEGLGEGVTF). The Cytoplasmic segment spans residues 180–200 (PAMHAMWSSWAPPLERSKLLS). A helical transmembrane segment spans residues 201–221 (ISYAGAQLGTVISLPLSGIIC). Residues 222 to 227 (YYMNWT) lie on the Lumenal side of the membrane. Residues 228–248 (YVFYFFGTIGIFWFLLWIWLV) form a helical membrane-spanning segment. Topologically, residues 249–279 (SDTPQKHKRISHYEKEYILSSLRNQLSSQKS) are cytoplasmic. The helical transmembrane segment at 280–300 (VPWVPILKSLPLWAIVVAHFS) threads the bilayer. Over 301 to 328 (YNWTFYTLLTLLPTYMKEILRFNVQENG) the chain is Lumenal. A helical transmembrane segment spans residues 329–349 (FLSSLPYLGSWLCMILSGQAA). The Cytoplasmic segment spans residues 350-365 (DNLRAKWNFSTLCVRR). The helical transmembrane segment at 366–386 (IFSLIGMIGPAVFLVAAGFIG) threads the bilayer. The Lumenal segment spans residues 387–391 (CDYSL). Residues 392–412 (AVAFLTISTTLGGFCSSGFSI) form a helical membrane-spanning segment. Over 413–423 (NHLDIAPSYAG) the chain is Cytoplasmic. The helical transmembrane segment at 424-444 (ILLGITNTFATIPGMVGPVIA) threads the bilayer. Over 445–457 (KSLTPDNTVGEWQ) the chain is Lumenal. A helical transmembrane segment spans residues 458–478 (TVFYIAAAINVFGAIFFTLFA). Residues 479 to 495 (KGEVQNWALNDHHGHRH) lie on the Cytoplasmic side of the membrane.

The protein belongs to the major facilitator superfamily. Sodium/anion cotransporter family. In the adult, detected in placenta, kidney and pancreas. Abundant in the endothelial cells of tumors from ovary, colon, breast and lung, but is not detected in endothelial cells from the corresponding normal tissues. Highly expressed in salivary glands and liver, with lower levels of expression in brain, spleen kidney, muscle and pancreas. Expressed in acinar cells of salivary glands (at protein level).

The protein resides in the basolateral cell membrane. It is found in the cytoplasmic vesicle. Its subcellular location is the secretory vesicle. The protein localises to the synaptic vesicle membrane. It localises to the lysosome membrane. It catalyses the reaction N-acetylneuraminate(in) + H(+)(in) = N-acetylneuraminate(out) + H(+)(out). It carries out the reaction D-glucuronate(out) + H(+)(out) = D-glucuronate(in) + H(+)(in). The catalysed reaction is 2 nitrate(out) + H(+)(out) = 2 nitrate(in) + H(+)(in). The enzyme catalyses L-aspartate(out) = L-aspartate(in). It catalyses the reaction L-glutamate(out) = L-glutamate(in). It carries out the reaction N-acetyl-L-aspartyl-L-glutamate(out) = N-acetyl-L-aspartyl-L-glutamate(in). Multifunctional anion transporter that operates via two distinct transport mechanisms, namely proton-coupled anion cotransport and membrane potential-dependent anion transport. Electroneutral proton-coupled acidic monosaccharide symporter, with a sugar to proton stoichiometry of 1:1. Exports glucuronic acid and free sialic acid derived from sialoglycoconjugate degradation out of lysosomes, driven by outwardly directed lysosomal pH gradient. May regulate lysosome function and metabolism of sialylated conjugates that impact oligodendrocyte lineage differentiation and myelinogenesis in the central nervous system. Electrogenic proton-coupled nitrate symporter that transports nitrate ions across the basolateral membrane of salivary gland acinar cells, with nitrate to proton stoichiometry of 2:1. May contribute to nitrate clearance from serum by salivary glands, where it is further concentrated and secreted in the saliva. Uses membrane potential to drive the uptake of acidic amino acids and peptides into synaptic vesicles. Responsible for synaptic vesicular storage of L-aspartate and L-glutamate in pinealocytes as well as vesicular uptake of N-acetyl-L-aspartyl-L-glutamate neuropeptide, relevant to aspartegic-associated glutamatergic neurotransmission and activation of metabotropic receptors that inhibit subsequent transmitter release. Its function is as follows. Receptor for CM101, a polysaccharide produced by group B Streptococcus with antipathoangiogenic properties. This Homo sapiens (Human) protein is Sialin (SLC17A5).